The following is a 6713-amino-acid chain: Extracellular matrix-binding protein EbhA (6713 aa).

FIVAR domains follow at residues 1–58, 126–184, 252–310, 378–436, 504–562, 630–688, 756–814, 882–940, 1008–1066, 1134–1192, 1260–1318, 1386–1444, 1512–1570, 1638–1696, 1764–1822, 1890–1948, 2142–2200, 2268–2325, 2393–2451, 2519–2577, 2645–2703, 2771–2829, 2897–2955, 3023–3081, 3149–3207, 3275–3333, 3401–3459, 3527–3585, 3653–3711, 3779–3837, 3905–3963, 4031–4089, 4157–4218, 4283–4341, 4409–4467, 4535–4592, 4660–4718, 4786–4844, 4912–4970, 5038–5096, 5164–5222, 5290–5344, 5412–5471, and 5666–5722; these read MGNL…VEQA, AMGQ…VTAA, AMKG…ITQA, QMGN…VEAA, AMAN…VENA, AMGT…INQI, AMGQ…VDRA, AMNS…VDNA, AMGA…INDM, AMTA…VNSA, AMHS…VEQA, AMGQ…VERA, AMTA…VTNA, AMKG…INQA, AMTN…VETA, AMNQ…INQK, AMGN…VQAA, AMGQ…VEAA, AMQR…VEQA, AMDQ…VTAA, AMNQ…VTQA, AMER…VEAA, AMGN…VEAA, AMDK…INQA, AMGN…VEQA, AMTQ…ITAA, AMTQ…IQQA, AMTN…VEQA, AMTQ…VAQA, AMGT…VTKA, AMGN…ITRA, AMDQ…ITNE, AMEL…VNGA, AMHG…INQV, LMDA…VSSA, AMKA…IDQA, AMEA…VEQL, AMQA…VEQL, AMET…VEQA, SMDQ…VDQA, AMDQ…VIKL, and AMET…INGA. Residues 6518–6540 traverse the membrane as a helical segment; sequence VIKNAIGVVGISGLLASFWFFIA. Residues 6616–6713 form a disordered region; the sequence is RRKEDEEDVE…KKKKSKKNKK (98 aa). Composition is skewed to basic and acidic residues over residues 6631-6641 and 6680-6690; these read TDEKVLKDNEH and QKDNQSKDKKS. Residues 6695–6713 are compositionally biased toward basic residues; that stretch reads TSKKVAAKKKKKKSKKNKK.

It is found in the cell membrane. The protein is Extracellular matrix-binding protein EbhA (ebhA) of Staphylococcus aureus (strain Mu3 / ATCC 700698).